We begin with the raw amino-acid sequence, 329 residues long: Beta-ketoacyl-[acyl-carrier-protein] synthase III (329 aa).

Residues cysteine 123 and histidine 256 contribute to the active site. Residues 257–261 (QANIR) form an ACP-binding region. Residue asparagine 286 is part of the active site.

Belongs to the thiolase-like superfamily. FabH family. Homodimer.

The protein localises to the cytoplasm. It catalyses the reaction malonyl-[ACP] + acetyl-CoA + H(+) = 3-oxobutanoyl-[ACP] + CO2 + CoA. The protein operates within lipid metabolism; fatty acid biosynthesis. Functionally, catalyzes the condensation reaction of fatty acid synthesis by the addition to an acyl acceptor of two carbons from malonyl-ACP. Catalyzes the first condensation reaction which initiates fatty acid synthesis and may therefore play a role in governing the total rate of fatty acid production. Possesses both acetoacetyl-ACP synthase and acetyl transacylase activities. Its substrate specificity determines the biosynthesis of branched-chain and/or straight-chain of fatty acids. The polypeptide is Beta-ketoacyl-[acyl-carrier-protein] synthase III (Burkholderia cenocepacia (strain HI2424)).